We begin with the raw amino-acid sequence, 252 residues long: tRNA pseudouridine synthase A (252 aa).

D52 functions as the Nucleophile in the catalytic mechanism. Y110 is a binding site for substrate.

It belongs to the tRNA pseudouridine synthase TruA family. As to quaternary structure, homodimer.

The enzyme catalyses uridine(38/39/40) in tRNA = pseudouridine(38/39/40) in tRNA. Its function is as follows. Formation of pseudouridine at positions 38, 39 and 40 in the anticodon stem and loop of transfer RNAs. This Syntrophotalea carbinolica (strain DSM 2380 / NBRC 103641 / GraBd1) (Pelobacter carbinolicus) protein is tRNA pseudouridine synthase A.